A 159-amino-acid chain; its full sequence is Ribosome maturation factor RimP (159 aa).

The protein belongs to the RimP family.

It is found in the cytoplasm. Its function is as follows. Required for maturation of 30S ribosomal subunits. In Geobacter sulfurreducens (strain ATCC 51573 / DSM 12127 / PCA), this protein is Ribosome maturation factor RimP.